A 1423-amino-acid polypeptide reads, in one-letter code: DNA-directed RNA polymerase subunit beta' (1423 aa).

Residues Cys71, Cys73, Cys86, and Cys89 each contribute to the Zn(2+) site. Residues Asp461, Asp463, and Asp465 each contribute to the Mg(2+) site. Positions 815, 889, 896, and 899 each coordinate Zn(2+).

It belongs to the RNA polymerase beta' chain family. As to quaternary structure, the RNAP catalytic core consists of 2 alpha, 1 beta, 1 beta' and 1 omega subunit. When a sigma factor is associated with the core the holoenzyme is formed, which can initiate transcription. Mg(2+) is required as a cofactor. It depends on Zn(2+) as a cofactor.

It carries out the reaction RNA(n) + a ribonucleoside 5'-triphosphate = RNA(n+1) + diphosphate. In terms of biological role, DNA-dependent RNA polymerase catalyzes the transcription of DNA into RNA using the four ribonucleoside triphosphates as substrates. The protein is DNA-directed RNA polymerase subunit beta' of Actinobacillus pleuropneumoniae serotype 3 (strain JL03).